Here is a 434-residue protein sequence, read N- to C-terminus: Sulfide-quinone reductase (434 aa).

FAD is bound by residues glycine 8–glycine 12, serine 34–alanine 35, and serine 77–alanine 78. Cysteine 160 acts as the Cysteine persulfide intermediate in catalysis. Positions 302 and 322 each coordinate FAD. The Cysteine persulfide intermediate role is filled by cysteine 356. Lysine 391 serves as a coordination point for FAD.

Belongs to the SQRD family. As to quaternary structure, homodimer. The cofactor is FAD.

It is found in the membrane. The enzyme catalyses n a quinone + n hydrogen sulfide + n H(+) = polysulfur(n-2) + n a quinol. Functionally, catalyzes the oxidation of hydrogen sulfide, with the help of a quinone. Consecutive reaction cycles lead to the accumulation of a polysulfide product on the active site Cys residues; these products are released when they exceed a critical length, typically as cyclooctasulfur. The sequence is that of Sulfide-quinone reductase from Acidithiobacillus ferrooxidans (strain ATCC 23270 / DSM 14882 / CIP 104768 / NCIMB 8455) (Ferrobacillus ferrooxidans (strain ATCC 23270)).